A 183-amino-acid chain; its full sequence is Thioredoxin/glutathione peroxidase BtuE (183 aa).

Residue C37 is part of the active site.

Belongs to the glutathione peroxidase family. BtuE subfamily.

It is found in the periplasm. It catalyses the reaction 2 glutathione + H2O2 = glutathione disulfide + 2 H2O. It carries out the reaction a hydroperoxide + [thioredoxin]-dithiol = an alcohol + [thioredoxin]-disulfide + H2O. Non-specific peroxidase that can use thioredoxin or glutathione as a reducing agent. In vitro, utilizes preferentially thioredoxin A to decompose hydrogen peroxide as well as cumene-, tert-butyl-, and linoleic acid hydroperoxides, suggesting that it may have one or more organic hydroperoxide as its physiological substrate. The chain is Thioredoxin/glutathione peroxidase BtuE from Escherichia coli (strain K12).